Here is a 108-residue protein sequence, read N- to C-terminus: Thioredoxin (108 aa).

The Thioredoxin domain occupies 2 to 108; the sequence is SDAILYVSDD…QLTAFLDSQL (107 aa). An intrachain disulfide couples Cys33 to Cys36.

The protein belongs to the thioredoxin family.

Its function is as follows. Component of the thioredoxin-thioredoxin reductase system. Participates in various redox reactions through the reversible oxidation of its active center dithiol to a disulfide and catalyzes dithiol-disulfide exchange reactions. The sequence is that of Thioredoxin (trxA) from Acidithiobacillus ferridurans.